The primary structure comprises 246 residues: MIKVGVFGALGRMGSEVVKAVEAADDTELVAGIDVGDDRGKVLGADVVVDFTHPDAVMDNLRWLIEHGIHAVVGTTGFDDARLAEVRRMLDAKPGVNVLIAPNFGIAAVLMMHFAAKAAPYFESAEIIELHHPNKADAPSGTAYRTAELIGAARAHAGLGDAPDATTSELPGARGAQVDGVRVHALRITGMIAHQEVVFGTHGETLRIRHDSMNRESFMPGVLLGVRKVASLPDRLTVGLESLLGL.

NAD(+)-binding positions include 8–13 (GALGRM), D34, 74–76 (GTT), and 101–104 (APNF). H131 acts as the Proton donor/acceptor in catalysis. Position 132 (H132) interacts with (S)-2,3,4,5-tetrahydrodipicolinate. K135 acts as the Proton donor in catalysis. Residue 141–142 (GT) coordinates (S)-2,3,4,5-tetrahydrodipicolinate.

The protein belongs to the DapB family.

Its subcellular location is the cytoplasm. It catalyses the reaction (S)-2,3,4,5-tetrahydrodipicolinate + NAD(+) + H2O = (2S,4S)-4-hydroxy-2,3,4,5-tetrahydrodipicolinate + NADH + H(+). It carries out the reaction (S)-2,3,4,5-tetrahydrodipicolinate + NADP(+) + H2O = (2S,4S)-4-hydroxy-2,3,4,5-tetrahydrodipicolinate + NADPH + H(+). It participates in amino-acid biosynthesis; L-lysine biosynthesis via DAP pathway; (S)-tetrahydrodipicolinate from L-aspartate: step 4/4. In terms of biological role, catalyzes the conversion of 4-hydroxy-tetrahydrodipicolinate (HTPA) to tetrahydrodipicolinate. This Thermobifida fusca (strain YX) protein is 4-hydroxy-tetrahydrodipicolinate reductase.